The following is a 333-amino-acid chain: Holliday junction branch migration complex subunit RuvB (333 aa).

Residues 1–181 are large ATPase domain (RuvB-L); sequence MNDILNKEPM…FGISSHMEYY (181 aa). ATP contacts are provided by residues L20, R21, G62, K65, T66, T67, 128–130, R171, Y181, and R218; that span reads EDF. A Mg(2+)-binding site is contributed by T66. The tract at residues 182 to 252 is small ATPAse domain (RuvB-S); that stretch reads QERDLEEIVK…ITDKALTILD (71 aa). The head domain (RuvB-H) stretch occupies residues 255 to 333; sequence AAGLDYIDQK…HLGYVYNEEE (79 aa). Positions 291, 310, and 315 each coordinate DNA.

The protein belongs to the RuvB family. Homohexamer. Forms an RuvA(8)-RuvB(12)-Holliday junction (HJ) complex. HJ DNA is sandwiched between 2 RuvA tetramers; dsDNA enters through RuvA and exits via RuvB. An RuvB hexamer assembles on each DNA strand where it exits the tetramer. Each RuvB hexamer is contacted by two RuvA subunits (via domain III) on 2 adjacent RuvB subunits; this complex drives branch migration. In the full resolvosome a probable DNA-RuvA(4)-RuvB(12)-RuvC(2) complex forms which resolves the HJ.

It is found in the cytoplasm. The enzyme catalyses ATP + H2O = ADP + phosphate + H(+). The RuvA-RuvB-RuvC complex processes Holliday junction (HJ) DNA during genetic recombination and DNA repair, while the RuvA-RuvB complex plays an important role in the rescue of blocked DNA replication forks via replication fork reversal (RFR). RuvA specifically binds to HJ cruciform DNA, conferring on it an open structure. The RuvB hexamer acts as an ATP-dependent pump, pulling dsDNA into and through the RuvAB complex. RuvB forms 2 homohexamers on either side of HJ DNA bound by 1 or 2 RuvA tetramers; 4 subunits per hexamer contact DNA at a time. Coordinated motions by a converter formed by DNA-disengaged RuvB subunits stimulates ATP hydrolysis and nucleotide exchange. Immobilization of the converter enables RuvB to convert the ATP-contained energy into a lever motion, pulling 2 nucleotides of DNA out of the RuvA tetramer per ATP hydrolyzed, thus driving DNA branch migration. The RuvB motors rotate together with the DNA substrate, which together with the progressing nucleotide cycle form the mechanistic basis for DNA recombination by continuous HJ branch migration. Branch migration allows RuvC to scan DNA until it finds its consensus sequence, where it cleaves and resolves cruciform DNA. The protein is Holliday junction branch migration complex subunit RuvB of Lactococcus lactis subsp. cremoris (strain SK11).